Reading from the N-terminus, the 144-residue chain is Androgenic gland hormone (144 aa).

Positions 1 to 21 (MKGLVILVSLMCLALYNRICA) are cleaved as a signal peptide. 4 disulfide bridges follow: C33/C123, C42/C59, C44/C141, and C124/C132. The propeptide at 68-113 (SAPEDELAFEDYEDQDYFHPRALSIPSEIEHDNEKESDAFSILSRG) is c peptide. A glycan (N-linked (GlcNAc...) (complex) asparagine) is linked at N133.

As to expression, androgenic gland.

The protein localises to the secreted. Controls sex differentiation and the formation of male appendages, spermatogenesis, pigmentation, and male specific behavior. This Armadillidium vulgare (Pillbug) protein is Androgenic gland hormone.